Reading from the N-terminus, the 128-residue chain is B2 protein (128 aa).

The first 10 residues, 1-10 (SLILLVAVQA), serve as a signal peptide directing secretion. Intrachain disulfides connect Cys26-Cys57 and Cys97-Cys114.

This sequence belongs to the PBP/GOBP family. N-glycosylated. Tubular accessory sex gland.

The protein localises to the secreted. In terms of biological role, may be a carrier protein for lipids. This is B2 protein from Tenebrio molitor (Yellow mealworm beetle).